The sequence spans 329 residues: BTB/POZ domain-containing adapter for CUL3-mediated RhoA degradation protein 1 (329 aa).

The segment covering 1–15 has biased composition (low complexity); sequence MSAEASGPAAAEAPS. Residues 1–21 are disordered; the sequence is MSAEASGPAAAEAPSLEVAKP. A BTB domain is found at 41 to 109; that stretch reads KYVKLNVGGS…LRDGSVPLPE (69 aa). The segment at 280 to 302 is disordered; it reads LEATGGAAGGGGASRGEDEDNRE.

Belongs to the BACURD family. In terms of assembly, homotetramer; forms a two-fold symmetric tetramer in solution. Interacts with CUL3; interaction is direct and forms a 5:5 heterodecamer. Component of the BCR(KCTD13) E3 ubiquitin ligase complex, at least composed of CUL3, KCTD13/BACURD1 and RBX1. Interacts with RHOA; with a preference for RhoA-GDP. Interacts with POLD2 and PCNA. Interacts with SPRTN.

The protein resides in the nucleus. The protein operates within protein modification; protein ubiquitination. Substrate-specific adapter of a BCR (BTB-CUL3-RBX1) E3 ubiquitin-protein ligase complex required for synaptic transmission. The BCR(KCTD13) E3 ubiquitin ligase complex mediates the ubiquitination of RHOA, leading to its degradation by the proteasome, thereby regulating the actin cytoskeleton and promoting synaptic transmission. The protein is BTB/POZ domain-containing adapter for CUL3-mediated RhoA degradation protein 1 (KCTD13) of Bos taurus (Bovine).